The chain runs to 314 residues: Olfactory receptor 5P6 (314 aa).

The Extracellular portion of the chain corresponds to 1–28 (MAFQEDGNHTAVTEFVLFGLTDDPVLRV). N-linked (GlcNAc...) asparagine glycosylation is present at asparagine 8. The chain crosses the membrane as a helical span at residues 29–49 (ILFIIFLCIYLVTVSGNLSTI). Residues 50–57 (LLIRVSSQ) are Cytoplasmic-facing. Residues 58 to 78 (LHHPMYFFLSHLAFADIGYSS) traverse the membrane as a helical segment. Residues 79-102 (SVTPNMLVNFLVERHTISYIGCAI) lie on the Extracellular side of the membrane. Residues cysteine 100 and cysteine 192 are joined by a disulfide bond. A helical membrane pass occupies residues 103 to 123 (QLGSVVFFGSSECFILAAMAY). Topologically, residues 124–136 (DRFMAICNPLLYS) are cytoplasmic. Residues 137 to 157 (TKMSTQVCVQLLLIAYIGGFL) traverse the membrane as a helical segment. Topologically, residues 158–199 (NTWSFTICFYSLVFCGPNGVNHFFCDFAPLIELSCSDVSVPA) are extracellular. The helical transmembrane segment at 200-220 (TVPSFTAGSIIVVTVIVIAIS) threads the bilayer. Residues 221–240 (YIYILITILKMHSTEGRQKA) lie on the Cytoplasmic side of the membrane. The helical transmembrane segment at 241 to 261 (FSTCTSHLTAVTLFYGTITFI) threads the bilayer. Residues 262-274 (YVMPKSSFSTDQN) are Extracellular-facing. The chain crosses the membrane as a helical span at residues 275-295 (KVVSVFYMVVIPMLNPLIYSL). The Cytoplasmic portion of the chain corresponds to 296–314 (RNNEIKGALKRQIGRKIFS).

The protein belongs to the G-protein coupled receptor 1 family.

It localises to the cell membrane. In terms of biological role, potential odorant receptor. The polypeptide is Olfactory receptor 5P6 (Mus musculus (Mouse)).